The primary structure comprises 813 residues: Valine--tRNA ligase (813 aa).

The 'HIGH' region signature appears at 46-56 (PTVSGQLHIGH). The 'KMSKS' region motif lies at 536–540 (KMSKS). Lys539 contributes to the ATP binding site.

The protein belongs to the class-I aminoacyl-tRNA synthetase family. ValS type 2 subfamily. In terms of assembly, monomer.

It localises to the cytoplasm. It carries out the reaction tRNA(Val) + L-valine + ATP = L-valyl-tRNA(Val) + AMP + diphosphate. Functionally, catalyzes the attachment of valine to tRNA(Val). As ValRS can inadvertently accommodate and process structurally similar amino acids such as threonine, to avoid such errors, it has a 'posttransfer' editing activity that hydrolyzes mischarged Thr-tRNA(Val) in a tRNA-dependent manner. This is Valine--tRNA ligase from Rickettsia canadensis (strain McKiel).